The sequence spans 350 residues: Histidinol-phosphate aminotransferase (350 aa).

Lys210 carries the post-translational modification N6-(pyridoxal phosphate)lysine.

This sequence belongs to the class-II pyridoxal-phosphate-dependent aminotransferase family. Histidinol-phosphate aminotransferase subfamily. As to quaternary structure, homodimer. Requires pyridoxal 5'-phosphate as cofactor.

The catalysed reaction is L-histidinol phosphate + 2-oxoglutarate = 3-(imidazol-4-yl)-2-oxopropyl phosphate + L-glutamate. Its pathway is amino-acid biosynthesis; L-histidine biosynthesis; L-histidine from 5-phospho-alpha-D-ribose 1-diphosphate: step 7/9. This chain is Histidinol-phosphate aminotransferase, found in Pseudomonas syringae pv. syringae (strain B728a).